The primary structure comprises 433 residues: tRNA modification GTPase MnmE (433 aa).

The (6S)-5-formyl-5,6,7,8-tetrahydrofolate site is built by Arg-24, Glu-86, and Lys-125. The 146-residue stretch at 218 to 363 (GARLALIGAP…LKEALREALL (146 aa)) folds into the TrmE-type G domain. Asn-228 provides a ligand contact to K(+). GTP contacts are provided by residues 228–233 (NAGKSS), 247–253 (SPIPGTT), and 272–275 (DTAG). Ser-232 contacts Mg(2+). Ser-247, Ile-249, and Thr-252 together coordinate K(+). Thr-253 contributes to the Mg(2+) binding site. Lys-433 contacts (6S)-5-formyl-5,6,7,8-tetrahydrofolate.

The protein belongs to the TRAFAC class TrmE-Era-EngA-EngB-Septin-like GTPase superfamily. TrmE GTPase family. Homodimer. Heterotetramer of two MnmE and two MnmG subunits. Requires K(+) as cofactor.

The protein localises to the cytoplasm. In terms of biological role, exhibits a very high intrinsic GTPase hydrolysis rate. Involved in the addition of a carboxymethylaminomethyl (cmnm) group at the wobble position (U34) of certain tRNAs, forming tRNA-cmnm(5)s(2)U34. This Thermus thermophilus (strain ATCC BAA-163 / DSM 7039 / HB27) protein is tRNA modification GTPase MnmE.